Consider the following 293-residue polypeptide: Signal recognition particle receptor FtsY (293 aa).

Residues 93–100, 175–179, and 239–242 each bind GTP; these read GVNGAGKT, DTAGR, and TKLD.

The protein belongs to the GTP-binding SRP family. FtsY subfamily. In terms of assembly, part of the signal recognition particle protein translocation system, which is composed of SRP and FtsY. SRP is a ribonucleoprotein composed of Ffh and a 4.5S RNA molecule.

It is found in the cell inner membrane. Its subcellular location is the cytoplasm. It carries out the reaction GTP + H2O = GDP + phosphate + H(+). Functionally, involved in targeting and insertion of nascent membrane proteins into the cytoplasmic membrane. Acts as a receptor for the complex formed by the signal recognition particle (SRP) and the ribosome-nascent chain (RNC). Interaction with SRP-RNC leads to the transfer of the RNC complex to the Sec translocase for insertion into the membrane, the hydrolysis of GTP by both Ffh and FtsY, and the dissociation of the SRP-FtsY complex into the individual components. This Helicobacter pylori (strain J99 / ATCC 700824) (Campylobacter pylori J99) protein is Signal recognition particle receptor FtsY.